The following is a 305-amino-acid chain: Serine/threonine-protein phosphatase PP-X isozyme 2 (305 aa).

The Mn(2+) site is built by Asp51, His53, Asp79, and Asn111. Residue His112 is the Proton donor of the active site. Residues His161 and His236 each coordinate Mn(2+).

The protein belongs to the PPP phosphatase family. PP-4 (PP-X) subfamily. Mn(2+) serves as cofactor. Ubiquitous, mostly expressed in root mersitems, flowers, and vascular tissues.

It localises to the plastid stroma. It catalyses the reaction O-phospho-L-seryl-[protein] + H2O = L-seryl-[protein] + phosphate. It carries out the reaction O-phospho-L-threonyl-[protein] + H2O = L-threonyl-[protein] + phosphate. The sequence is that of Serine/threonine-protein phosphatase PP-X isozyme 2 (PPX2) from Arabidopsis thaliana (Mouse-ear cress).